A 343-amino-acid polypeptide reads, in one-letter code: Diterpene cyclase DtcycB (343 aa).

The Mg(2+) site is built by Asn-219, Ser-223, and Glu-227.

It belongs to the terpene synthase family. In terms of assembly, homodimer. The cofactor is Mg(2+).

The enzyme catalyses (2E,6E,10E)-geranylgeranyl diphosphate + H2O = (R)-nephthenol + diphosphate. It carries out the reaction (2E,6E,10E)-geranylgeranyl diphosphate = (R)-cembrene A + diphosphate. The catalysed reaction is (2E,6E,10E)-geranylgeranyl diphosphate + H2O = (1S,4E,8E,12E)-2,2,5,9,13-pentamethylcyclopentadeca-4,8,12-trien-1-ol + diphosphate. Functionally, diterpene cyclases that can form multiple diterpene products. The sequence is that of Diterpene cyclase DtcycB from Streptomyces sp.